The primary structure comprises 270 residues: Palmitoyltransferase ZDHHC12-A (270 aa).

Topologically, residues Met1–Ser8 are cytoplasmic. A helical transmembrane segment spans residues Gly9–Leu29. At His30 to Gln45 the chain is on the lumenal side. A helical transmembrane segment spans residues Pro46–Met66. At Asp67 to Arg145 the chain is on the cytoplasmic side. The DHHC domain maps to Arg102–Cys152. Cys132 functions as the S-palmitoyl cysteine intermediate in the catalytic mechanism. The chain crosses the membrane as a helical span at residues Trp146–Trp166. Residues Ser167 to Asn182 lie on the Lumenal side of the membrane. Residues Val183–Leu203 form a helical membrane-spanning segment. Topologically, residues Cys204–Val270 are cytoplasmic.

The protein belongs to the DHHC palmitoyltransferase family.

It localises to the golgi apparatus membrane. It is found in the endoplasmic reticulum membrane. It carries out the reaction L-cysteinyl-[protein] + hexadecanoyl-CoA = S-hexadecanoyl-L-cysteinyl-[protein] + CoA. In terms of biological role, palmitoyltransferase that catalyzes the addition of palmitate onto various protein substrates. Has a palmitoyltransferase activity toward gephyrin/GPHN, regulating its clustering at synapses and its function in gamma-aminobutyric acid receptor clustering. Acts as an inhibitor of the NLRP3 inflammasome by mediating palmitoylation of NLRP3, thereby promoting NLRP3 degradation by the chaperone-mediated autophagy (CMA) process. The sequence is that of Palmitoyltransferase ZDHHC12-A from Danio rerio (Zebrafish).